The sequence spans 50 residues: Defensin D4 (50 aa).

Disulfide bonds link Cys3/Cys50, Cys14/Cys35, Cys20/Cys44, and Cys24/Cys46.

As to expression, detected in seeds (at protein level).

It localises to the secreted. Its function is as follows. Antimicrobial peptide with antifungal activity. The protein is Defensin D4 of Nigella sativa (Black cumin).